Here is a 1248-residue protein sequence, read N- to C-terminus: Apoptotic protease-activating factor 1 (1248 aa).

A CARD domain is found at 1 to 90 (MDAKARNCLL…KDLAALLHDG (90 aa)). The NB-ARC domain occupies 104–415 (SGITSYVRTV…METEEVEDIL (312 aa)). ATP is bound by residues 154 to 161 (GMAGCGKS) and Arg265. The WD 1-1 repeat unit spans residues 613–652 (PHTDAVYHACFSEDGQRIASCGADKTLQVFKAETGEKLLE). One copy of the WD 1-2 repeat lies at 655–694 (AHEDEVLCCAFSTDDRFIATCSVDKKVKIWNSMTGELVHT). Residues 697–738 (EHSEQVNCCHFTNSSHHLLLATGSSDCFLKLWDLNQKECRNT) form a WD 1-3 repeat. Residues 741 to 780 (GHTNSVNHCRFSPDDKLLASCSADGTLKLWDATSANERKS) form a WD 1-4 repeat. The stretch at 796 to 836 (DMEVIVKCCSWSADGARIMVAAKNKIFLFDIHTSGLLGEIH) is one WD 1-5 repeat. The stretch at 838 to 877 (GHHSTIQYCDFSPQNHLAVVALSQYCVELWNTDSRSKVAD) is one WD 1-6 repeat. The stretch at 880–910 (GHLSWVHGVMFSPDGSSFLTSSDDQTIRLWE) is one WD 1-7 repeat. Residues 910–921 (ETKKVCKNSAVM) are interpropeller linker. One copy of the WD 2-1 repeat lies at 922–958 (LKQEVDVVFQENEVMVLAVDHIRRLQLINGRTGQIDY). A WD 2-2 repeat occupies 959–998 (LTEAQVSCCCLSPHLQYIAFGDENGAIEILELVNNRIFQS). The WD 2-3 repeat unit spans residues 1001 to 1040 (QHKKTVWHIQFTADEKTLISSSDDAEIQVWNWQLDKCIFL). One copy of the WD 2-4 repeat lies at 1042–1080 (GHQETVKDFRLLKNSRLLSWSFDGTVKVWNIITGNKEKD). A WD 2-5 repeat occupies 1083–1122 (CHQGTVLSCDISHDATKFSSTSADKTAKIWSFDLLLPLHE). A WD 2-6 repeat occupies 1125–1164 (GHNGCVRCSAFSVDSTLLATGDDNGEIRIWNVSNGELLHL). The stretch at 1175-1212 (THGGWVTDLCFSPDGKMLISAGGYIKWWNVVTGESSQT) is one WD 2-7 repeat. The stretch at 1213-1248 (FYTNGTNLKKIHVSPDFKTYVTVDNLGILYILQTLE) is one WD 2-8 repeat.

As to quaternary structure, monomer. Oligomerizes to a heptameric ring, known as the apoptosome, upon binding of cytochrome c and dATP. Oligomeric Apaf-1 and pro-caspase-9 bind to each other via their respective NH2-terminal CARD domains and consecutively mature caspase-9 is released from the complex. Pro-caspase-3 is recruited into the Apaf-1-pro-caspase-9 complex via interaction with pro-caspase-9. Interacts with APIP. Interacts (via CARD and NACHT domains) with NAIP/BIRC1 (via NACHT domain). Interacts with CIAO2A. As to expression, ubiquitous. Highest levels of expression in adult spleen and peripheral blood leukocytes, and in fetal brain, kidney and lung. Isoform 1 is expressed in heart, kidney and liver.

The protein resides in the cytoplasm. Its function is as follows. Oligomeric Apaf-1 mediates the cytochrome c-dependent autocatalytic activation of pro-caspase-9 (Apaf-3), leading to the activation of caspase-3 and apoptosis. This activation requires ATP. Isoform 6 is less effective in inducing apoptosis. The polypeptide is Apoptotic protease-activating factor 1 (Homo sapiens (Human)).